The chain runs to 594 residues: Cytoplasmic polyadenylation element-binding protein 2 (594 aa).

Basic and acidic residues predominate over residues K72–N90. 2 disordered regions span residues K72–G91 and G367–E388. Over residues G367–N378 the composition is skewed to gly residues. The 83-residue stretch at L458–F540 folds into the RRM domain.

Cytoplasmic polyadenylation element binding protein that binds to and regulates the translation of specific mRNAs. This chain is Cytoplasmic polyadenylation element-binding protein 2 (cpb-2), found in Caenorhabditis japonica.